The chain runs to 3127 residues: Probable polyketide synthase 33 (3127 aa).

Residues 24–457 form the Ketosynthase family 3 (KS3) domain; sequence SGDVAVVGIG…GSNVCLILSE (434 aa). Active-site for beta-ketoacyl synthase activity residues include Cys-196, His-335, and His-380. Residues 660-693 are acyl/malonyl transferase; sequence GVSADIIIGHSLGEISSAYCSGMIDFQTLCYLTY. Ser-670 (for acyl/malonyl transferase activity) is an active-site residue. Positions 958–1080 are N-terminal hotdog fold; it reads GPSIHSLGNN…GNFSLFKHNI (123 aa). In terms of domain architecture, PKS/mFAS DH spans 958-1257; the sequence is GPSIHSLGNN…CTIVGSNPDS (300 aa). The active-site Proton acceptor; for dehydratase activity is His-992. The C-terminal hotdog fold stretch occupies residues 1096 to 1257; it reads NFTTISKQDF…CTIVGSNPDS (162 aa). Residue Asp-1168 is the Proton donor; for dehydratase activity of the active site. The segment at 1369-1394 is disordered; sequence SNNNNNNNNNNNNNNNNNNNNKNNGY. The span at 1370–1394 shows a compositional bias: low complexity; that stretch reads NNNNNNNNNNNNNNNNNNNNKNNGY. Residues 2539–2616 enclose the Carrier domain; sequence SNNEIIRSTI…QSIEIIKSAH (78 aa). Ser-2576 carries the post-translational modification O-(pantetheine 4'-phosphoryl)serine. The segment at 2617–2659 is disordered; that stretch reads NKNNNNNNINNNNNNNNNNNNNNNNNNNNNNNNNNNNNNNNNN. Residues 2617–2671 adopt a coiled-coil conformation; it reads NKNNNNNNINNNNNNNNNNNNNNNNNNNNNNNNNNNNNNNNNNLVKKEQQSLDEF. The chain crosses the membrane as a helical span at residues 2937-2957; sequence VLTLYNIPITIFIAILIIDIF.

The cofactor is pantetheine 4'-phosphate.

It localises to the membrane. Functionally, probable polyketide synthase. In Dictyostelium discoideum (Social amoeba), this protein is Probable polyketide synthase 33 (pks33).